Here is a 289-residue protein sequence, read N- to C-terminus: Probable porphobilinogen deaminase (289 aa).

The residue at position 234 (Cys-234) is an S-(dipyrrolylmethanemethyl)cysteine.

This sequence belongs to the HMBS family. Dipyrromethane serves as cofactor.

The catalysed reaction is 4 porphobilinogen + H2O = hydroxymethylbilane + 4 NH4(+). The protein operates within porphyrin-containing compound metabolism; protoporphyrin-IX biosynthesis; coproporphyrinogen-III from 5-aminolevulinate: step 2/4. Functionally, tetrapolymerization of the monopyrrole PBG into the hydroxymethylbilane pre-uroporphyrinogen in several discrete steps. The protein is Probable porphobilinogen deaminase (hemC) of Archaeoglobus fulgidus (strain ATCC 49558 / DSM 4304 / JCM 9628 / NBRC 100126 / VC-16).